We begin with the raw amino-acid sequence, 174 residues long: Adenylate kinase (174 aa).

An NMP region spans residues 12-41 (STGDMLRAAIKAGTPLGLEAKKIIDEGGLV). AMP-binding positions include threonine 13, arginine 18, 39–41 (GLV), 67–70 (GFPR), and glutamine 74. Residues 104–141 (GRRVHLASGRTYHVTYNPPKVEGKDDVTGEDLIQRDDD) form an LID region. ATP is bound by residues arginine 105 and 114–115 (TY). Positions 138 and 149 each coordinate AMP.

This sequence belongs to the adenylate kinase family. In terms of assembly, monomer.

Its subcellular location is the cytoplasm. It carries out the reaction AMP + ATP = 2 ADP. Its pathway is purine metabolism; AMP biosynthesis via salvage pathway; AMP from ADP: step 1/1. In terms of biological role, catalyzes the reversible transfer of the terminal phosphate group between ATP and AMP. Plays an important role in cellular energy homeostasis and in adenine nucleotide metabolism. This chain is Adenylate kinase, found in Neisseria flavescens.